We begin with the raw amino-acid sequence, 211 residues long: Small ribosomal subunit protein uS3 (211 aa).

Residues 16–85 enclose the KH type-2 domain; sequence IDEYFKTKLV…NPQIEVKQVE (70 aa).

Belongs to the universal ribosomal protein uS3 family. In terms of assembly, part of the 30S ribosomal subunit.

In terms of biological role, binds the lower part of the 30S subunit head. This is Small ribosomal subunit protein uS3 from Methanococcus maripaludis (strain DSM 14266 / JCM 13030 / NBRC 101832 / S2 / LL).